Here is a 177-residue protein sequence, read N- to C-terminus: Large ribosomal subunit protein uL6 (177 aa).

The interval 151–177 (LRPPEPYKGKGVRYAGENVRRKEGKKK) is disordered.

Belongs to the universal ribosomal protein uL6 family. Part of the 50S ribosomal subunit.

In terms of biological role, this protein binds to the 23S rRNA, and is important in its secondary structure. It is located near the subunit interface in the base of the L7/L12 stalk, and near the tRNA binding site of the peptidyltransferase center. This chain is Large ribosomal subunit protein uL6, found in Phenylobacterium zucineum (strain HLK1).